The primary structure comprises 113 residues: UPF0060 membrane protein Mmcs_2513 (113 aa).

4 consecutive transmembrane segments (helical) span residues 12–32 (ALFVLAALLEIGGAWLVWQGV), 37–57 (GWIWAGAGVIALGAYGFVAAF), 66–86 (ILAAYGGVFVAGSLLWGVVVD), and 92–112 (RWDLTGALVCLVGVGLIMYAP).

It belongs to the UPF0060 family.

Its subcellular location is the cell membrane. The sequence is that of UPF0060 membrane protein Mmcs_2513 from Mycobacterium sp. (strain MCS).